A 152-amino-acid polypeptide reads, in one-letter code: Nascent polypeptide-associated complex subunit beta (152 aa).

Disordered regions lie at residues 19 to 39 (IGKG…AGDD) and 125 to 152 (NMQK…SKVE). Basic residues predominate over residues 23-32 (TPRRKVKRAP). An NAC-A/B domain is found at 36 to 101 (AGDDKKLQAT…GEDKELTELV (66 aa)).

It belongs to the NAC-beta family. Part of the nascent polypeptide-associated complex (NAC), consisting of npc-1/egd2 and npc-2/egd1. NAC associates with ribosomes via npc-2/egd1.

It is found in the cytoplasm. It localises to the nucleus. Component of the nascent polypeptide-associated complex (NAC), a dynamic component of the ribosomal exit tunnel, protecting the emerging polypeptides from interaction with other cytoplasmic proteins to ensure appropriate nascent protein targeting. The NAC complex also promotes mitochondrial protein import by enhancing productive ribosome interactions with the outer mitochondrial membrane and blocks the inappropriate interaction of ribosomes translating non-secretory nascent polypeptides with translocation sites in the membrane of the endoplasmic reticulum. Npc-2/egd1 may act as a transcription factor that exert a negative effect on the expression of several genes that are transcribed by RNA polymerase II. The polypeptide is Nascent polypeptide-associated complex subunit beta (npc-2) (Neurospora crassa (strain ATCC 24698 / 74-OR23-1A / CBS 708.71 / DSM 1257 / FGSC 987)).